The sequence spans 125 residues: Large ribosomal subunit protein bL20 (125 aa).

Belongs to the bacterial ribosomal protein bL20 family.

In terms of biological role, binds directly to 23S ribosomal RNA and is necessary for the in vitro assembly process of the 50S ribosomal subunit. It is not involved in the protein synthesizing functions of that subunit. In Methylobacterium radiotolerans (strain ATCC 27329 / DSM 1819 / JCM 2831 / NBRC 15690 / NCIMB 10815 / 0-1), this protein is Large ribosomal subunit protein bL20.